We begin with the raw amino-acid sequence, 101 residues long: DNA-binding protein Fis (101 aa).

A DNA-binding region (H-T-H motif) is located at residues glutamine 77–lysine 96.

It belongs to the transcriptional regulatory Fis family. In terms of assembly, homodimer.

In terms of biological role, activates ribosomal RNA transcription. Plays a direct role in upstream activation of rRNA promoters. This chain is DNA-binding protein Fis, found in Shewanella amazonensis (strain ATCC BAA-1098 / SB2B).